A 336-amino-acid polypeptide reads, in one-letter code: UPF0324 membrane protein lp_2841 (336 aa).

The next 9 membrane-spanning stretches (helical) occupy residues 5–22, 26–48, 84–106, 116–138, 150–172, 204–226, 255–277, 282–304, and 311–333; these read GILPGLVTSLVIAIISQG, FVPALGAATIAILLGIIGGNTFL, IGGFGVLFILCQMTITIVGALWL, VRMLMAGGNAVCGSSAIASIAPV, ITLVNLMGTVLMLTLPVLGMAVF, TVQFATIFKIMRIMMLVVVVLIF, WYVAGFLILCALNSLISLPAIIG, TISSWFEIIALAAIGLRLNLVNF, and LALYGLGVGTIQVVSALILITLL.

It belongs to the UPF0324 family.

It localises to the cell membrane. The chain is UPF0324 membrane protein lp_2841 from Lactiplantibacillus plantarum (strain ATCC BAA-793 / NCIMB 8826 / WCFS1) (Lactobacillus plantarum).